Consider the following 302-residue polypeptide: Recombination-associated protein RdgC (302 aa).

The protein belongs to the RdgC family.

The protein localises to the cytoplasm. It is found in the nucleoid. Functionally, may be involved in recombination. This is Recombination-associated protein RdgC from Actinobacillus pleuropneumoniae serotype 3 (strain JL03).